Consider the following 724-residue polypeptide: Disks large homolog 4 (724 aa).

2 S-palmitoyl cysteine lipidation sites follow: Cys-3 and Cys-5. The interval 15 to 35 (QDEDTPPLEHSPAHLPNQANS) is disordered. PDZ domains follow at residues 65 to 151 (EITL…VMRR) and 160 to 246 (EIKL…VAKP). Residues Ser-73 and Ser-142 each carry the phosphoserine modification. Position 240 is a phosphotyrosine (Tyr-240). Ser-295 carries the post-translational modification Phosphoserine. Residues 313–393 (RIVIHRGSTG…QTVTIIAQYK (81 aa)) form the PDZ 3 domain. Phosphoserine is present on residues Ser-415 and Ser-418. Position 420 is a phosphothreonine (Thr-420). Phosphoserine is present on residues Ser-422, Ser-425, Ser-449, and Ser-480. The region spanning 428–498 (KRGFYIRALF…PSKRRVERRE (71 aa)) is the SH3 domain. The 176-residue stretch at 534-709 (ARPIIILGPT…IYHKVKRVIE (176 aa)) folds into the Guanylate kinase-like domain. Position 580 is a phosphotyrosine (Tyr-580). Residues Ser-606 and Ser-654 each carry the phosphoserine modification. At Tyr-715 the chain carries Phosphotyrosine.

Belongs to the MAGUK family. In terms of assembly, interacts through its PDZ domains with ANO2 and NETO1. Interacts through its first two PDZ domains with GRIN2A, GRIN2B, GRIN2C, GRIN2D. Interacts with ASIC3. Interacts with SEMA4C. Interacts with CXADR. Interacts with KCND2. Interacts with SYNGAP1. Interacts with LRRC4 and LRRC4B. Interacts with ERBB4. Interacts with KCNA1, KCNA2, KCNA3 and KCNA4. Interacts through its first PDZ domain with GRIK2, KCNA4 and CRIPT. Interacts through its second PDZ domain with the PDZ domain of NOS1 or the C-terminus of CAPON. Interacts through its third PDZ domain with NLGN1 and CRIPT, and probably with NLGN2 and NLGN3. Interacts through its guanylate kinase-like domain with KIF13B. Interacts through its guanylate kinase-like domain with DLGAP1/GKAP, DLGAP2, DLGAP3, DLGAP4, MAP1A, BEGAIN and SIPA1L1. Isoform 2 interacts through an L27 domain with HGS/HRS and the first L27 domain of CASK. Interacts with ADR1B and ANKS1B. May interact with HTR2A. Interacts with ADAM22. Interacts with KLHL17 and LGI1. Interacts with FRMPD4 (via C-terminus). Interacts with LRFN1, LRFN2 and LRFN4. Interacts (via N-terminal tandem pair of PDZ domains) with GPER1 (via C-terminus tail motif); the interaction is direct and induces the increase of GPER1 protein levels residing at the plasma membrane surface in a estradiol-independent manner. Interacts (via N-terminus tandem pair of PDZ domains) with NOS1 (via N-terminal domain). Interacts with SHANK3. Interacts with KCNJ4. Interacts with GPR85. Interacts with CACNG2 and MPP2 (via the SH3-Guanylate kinase-like sub-module). Interacts with ADGRB1. Found in a complex with PRR7 and GRIN1. Interacts (via PDZ3 domain and to lesser degree via PDZ2 domain) with PRR7. Component of the postsynaptic hippocampal AMPA-type glutamate receptor (AMPAR) complex, at least composed of pore forming AMPAR subunits GRIA1, GRIA2 and GRIA3 and AMPAR auxiliary proteins SHISA6 and SHISA7. Interacts (via its first two PDZ domains) with SHISA6 and SHISA7 (via PDZ-binding motif); the interaction is direct. Interacts with RPH3A and GRIN2A; this ternary complex regulates NMDA receptor composition at postsynaptic membranes. Interacts with ABR and BCR. Interacts with DGKI (via PDZ-binding motif); controls the localization of DGKI to the synapse. Interacts with C9orf72, SMCR8 and RAB39B. Interacts with ZDHHC5. Interacts with PTEN (via PDZ domain-binding motif); the interaction is induced by NMDA and is required for PTEN location at postsynaptic density. Found in a complex with GRIA1, GRIA2, GRIA3, GRIA4, CACNG8 and CNIH2. Interacts with FAM81A; the interaction facilitates condensate formation via liquid-liquid phase separation. Interacts with ADGRL3. Interacts with SORCS3. In terms of processing, palmitoylated. Palmitoylation is required for targeting to postsynaptic density, plasma membrane and synapses. Palmitoylation by ZDHHC2 occurs when the synaptic activity decreases and induces DLG4 synaptic clustering. Palmitoylation by ZDHHC15 regulates trafficking to the postsynaptic density and function in synaptogenesis. Palmitoylation may play a role in glutamate receptor GRIA1 synapse clustering. Depalmitoylated by ABHD17A and ABHD17B and to a lesser extent by ABHD17C, ABHD12, ABHD13, LYPLA1 and LYPLA2. Undergoes rapid synaptic palmitoylation/depalmitoylation cycles during neuronal development which slow down in mature neurons. Ubiquitinated by MDM2 in response to NMDA receptor activation, leading to proteasome-mediated degradation of DLG4 which is required for AMPA receptor endocytosis. As to expression, brain.

The protein localises to the cell membrane. It localises to the postsynaptic density. Its subcellular location is the synapse. The protein resides in the cytoplasm. It is found in the cell projection. The protein localises to the axon. It localises to the dendritic spine. Its subcellular location is the dendrite. The protein resides in the presynapse. Functionally, postsynaptic scaffolding protein that plays a critical role in synaptogenesis and synaptic plasticity by providing a platform for the postsynaptic clustering of crucial synaptic proteins. Interacts with the cytoplasmic tail of NMDA receptor subunits and shaker-type potassium channels. Required for synaptic plasticity associated with NMDA receptor signaling. Overexpression or depletion of DLG4 changes the ratio of excitatory to inhibitory synapses in hippocampal neurons. May reduce the amplitude of ASIC3 acid-evoked currents by retaining the channel intracellularly. May regulate the intracellular trafficking of ADR1B. Also regulates AMPA-type glutamate receptor (AMPAR) immobilization at postsynaptic density keeping the channels in an activated state in the presence of glutamate and preventing synaptic depression. Under basal conditions, cooperates with FYN to stabilize palmitoyltransferase ZDHHC5 at the synaptic membrane through FYN-mediated phosphorylation of ZDHHC5 and its subsequent inhibition of association with endocytic proteins. This is Disks large homolog 4 from Homo sapiens (Human).